A 168-amino-acid chain; its full sequence is ATP synthase subunit b, chloroplastic (168 aa).

Residues 20 to 37 (LNLAVVLPIVFTLGRDTL) form a helical membrane-spanning segment.

It belongs to the ATPase B chain family. In terms of assembly, F-type ATPases have 2 components, F(1) - the catalytic core - and F(0) - the membrane proton channel. F(1) has five subunits: alpha(3), beta(3), gamma(1), delta(1), epsilon(1). F(0) has four main subunits: a(1), b(1), b'(1) and c(10-14). The alpha and beta chains form an alternating ring which encloses part of the gamma chain. F(1) is attached to F(0) by a central stalk formed by the gamma and epsilon chains, while a peripheral stalk is formed by the delta, b and b' chains.

It is found in the plastid. The protein resides in the chloroplast thylakoid membrane. In terms of biological role, f(1)F(0) ATP synthase produces ATP from ADP in the presence of a proton or sodium gradient. F-type ATPases consist of two structural domains, F(1) containing the extramembraneous catalytic core and F(0) containing the membrane proton channel, linked together by a central stalk and a peripheral stalk. During catalysis, ATP synthesis in the catalytic domain of F(1) is coupled via a rotary mechanism of the central stalk subunits to proton translocation. Its function is as follows. Component of the F(0) channel, it forms part of the peripheral stalk, linking F(1) to F(0). This Ostreococcus tauri protein is ATP synthase subunit b, chloroplastic.